The sequence spans 494 residues: MKYSDLRDFISQLQQMGELKRINVPVSPYLEMTEICDRTLRAAGPALLFEQPTGQKIPVLGNLFGTPHRVALGMGATDVSELRKIGHVLAMLKEPEPPKGFKDIMGLGSLVKSIWDMAPKELRGAPCHDIVWEGNDVDLARLPIQHCWPGDIAPLITWGLVITKGPHKKRQNLGIYRQQVIGRNKVIMRWLAQRGGALDFREHSIVNRGQPYPIAVALGADPATILGAVTPVPDSLSEYQFAGLLRGSRTELVKALGSELRVPASAEIVLEGHIYPDESHPSGYEHALEGPYGDHTGYYNEQDSFPVFTIDRITMRRDPIYHSTYTGKPPDEPAVLGVALNEVFIPLLQKQFSEILDFYLPPEGCSYRMAVVQMKKAYPGHAKRVMFGVWSFLRQFMYTKFIVVVDEDVNIRDWKEVIWAITTRVDPIRDTTLVDNTPIDYLDFASPVSGLGSKMGIDATNKWPGETDREWGRTITMTDEVKKRVDQIWQELGI.

N172 provides a ligand contact to Mn(2+). Prenylated FMN is bound by residues 175 to 177 (IYR), 189 to 191 (RWL), and 194 to 195 (RG). E238 is a Mn(2+) binding site. The Proton donor role is filled by D294.

This sequence belongs to the UbiD family. Homohexamer. Prenylated FMN is required as a cofactor. It depends on Mn(2+) as a cofactor.

The protein resides in the cell membrane. It carries out the reaction a 4-hydroxy-3-(all-trans-polyprenyl)benzoate + H(+) = a 2-(all-trans-polyprenyl)phenol + CO2. It participates in cofactor biosynthesis; ubiquinone biosynthesis. Its function is as follows. Catalyzes the decarboxylation of 3-octaprenyl-4-hydroxy benzoate to 2-octaprenylphenol, an intermediate step in ubiquinone biosynthesis. This Janthinobacterium sp. (strain Marseille) (Minibacterium massiliensis) protein is 3-octaprenyl-4-hydroxybenzoate carboxy-lyase.